The sequence spans 340 residues: Holliday junction branch migration complex subunit RuvB (340 aa).

A large ATPase domain (RuvB-L) region spans residues 1-182 (MSDIDPTVRA…FGIPTRLQFY (182 aa)). ATP-binding positions include leucine 21, arginine 22, glycine 63, lysine 66, threonine 67, threonine 68, 129–131 (EDF), arginine 172, tyrosine 182, and arginine 219. Threonine 67 lines the Mg(2+) pocket. A small ATPAse domain (RuvB-S) region spans residues 183-253 (TEDELFIIVD…LADMALNRLG (71 aa)). Positions 256–340 (HLGLDGADRR…PRAQTDLFEG (85 aa)) are head domain (RuvB-H). DNA contacts are provided by arginine 292, arginine 311, and arginine 316.

This sequence belongs to the RuvB family. As to quaternary structure, homohexamer. Forms an RuvA(8)-RuvB(12)-Holliday junction (HJ) complex. HJ DNA is sandwiched between 2 RuvA tetramers; dsDNA enters through RuvA and exits via RuvB. An RuvB hexamer assembles on each DNA strand where it exits the tetramer. Each RuvB hexamer is contacted by two RuvA subunits (via domain III) on 2 adjacent RuvB subunits; this complex drives branch migration. In the full resolvosome a probable DNA-RuvA(4)-RuvB(12)-RuvC(2) complex forms which resolves the HJ.

The protein localises to the cytoplasm. It carries out the reaction ATP + H2O = ADP + phosphate + H(+). The RuvA-RuvB-RuvC complex processes Holliday junction (HJ) DNA during genetic recombination and DNA repair, while the RuvA-RuvB complex plays an important role in the rescue of blocked DNA replication forks via replication fork reversal (RFR). RuvA specifically binds to HJ cruciform DNA, conferring on it an open structure. The RuvB hexamer acts as an ATP-dependent pump, pulling dsDNA into and through the RuvAB complex. RuvB forms 2 homohexamers on either side of HJ DNA bound by 1 or 2 RuvA tetramers; 4 subunits per hexamer contact DNA at a time. Coordinated motions by a converter formed by DNA-disengaged RuvB subunits stimulates ATP hydrolysis and nucleotide exchange. Immobilization of the converter enables RuvB to convert the ATP-contained energy into a lever motion, pulling 2 nucleotides of DNA out of the RuvA tetramer per ATP hydrolyzed, thus driving DNA branch migration. The RuvB motors rotate together with the DNA substrate, which together with the progressing nucleotide cycle form the mechanistic basis for DNA recombination by continuous HJ branch migration. Branch migration allows RuvC to scan DNA until it finds its consensus sequence, where it cleaves and resolves cruciform DNA. The protein is Holliday junction branch migration complex subunit RuvB of Roseobacter denitrificans (strain ATCC 33942 / OCh 114) (Erythrobacter sp. (strain OCh 114)).